The sequence spans 244 residues: 1-(5-phosphoribosyl)-5-[(5-phosphoribosylamino)methylideneamino] imidazole-4-carboxamide isomerase (244 aa).

Residue Asp-10 is the Proton acceptor of the active site. Catalysis depends on Asp-132, which acts as the Proton donor.

The protein belongs to the HisA/HisF family.

The protein resides in the cytoplasm. The catalysed reaction is 1-(5-phospho-beta-D-ribosyl)-5-[(5-phospho-beta-D-ribosylamino)methylideneamino]imidazole-4-carboxamide = 5-[(5-phospho-1-deoxy-D-ribulos-1-ylimino)methylamino]-1-(5-phospho-beta-D-ribosyl)imidazole-4-carboxamide. Its pathway is amino-acid biosynthesis; L-histidine biosynthesis; L-histidine from 5-phospho-alpha-D-ribose 1-diphosphate: step 4/9. This chain is 1-(5-phosphoribosyl)-5-[(5-phosphoribosylamino)methylideneamino] imidazole-4-carboxamide isomerase, found in Xanthomonas axonopodis pv. citri (strain 306).